The chain runs to 5911 residues: Nonribosomal peptide synthetase 30 (5911 aa).

Residues 1–22 (MVPEKPTAQSKSGIGEPFRAGD) form a disordered region. Residues 352-754 (ALIQPSSTAV…GRKDAQVKIR (403 aa)) form an adenylation 1 region. The Carrier 1 domain maps to 891 to 968 (PRPFSVEYSL…EAAAIVARGT (78 aa)). At serine 928 the chain carries O-(pantetheine 4'-phosphoryl)serine. A condensation 1 region spans residues 1007 to 1422 (EDAFPCTPLQ…ERLIFVIDQL (416 aa)). The interval 1467-1865 (ERALSQPDRP…SLMFVGRKAD (399 aa)) is adenylation 2. Residues 2001-2077 (QPTSELEAEM…NICSHSYYCS (77 aa)) enclose the Carrier 2 domain. Position 2038 is an O-(pantetheine 4'-phosphoryl)serine (serine 2038). The interval 2121–2538 (QDAYPCTPLQ…GPDINMSDIG (418 aa)) is condensation 2. Residues 2568 to 2977 (EEQARLRPEA…GRKDSQVKIR (410 aa)) are adenylation 3. Residues 3110–3186 (QPSTNAQREL…LIADNSKSIK (77 aa)) form the Carrier 3 domain. O-(pantetheine 4'-phosphoryl)serine is present on serine 3147. Residues 3227–3652 (VQDAYPCTPL…LELVIQAFMA (426 aa)) are condensation 3. The segment at 3701 to 4108 (EERVREQPNA…GRKDSQVKIR (408 aa)) is adenylation 4. Residues 4248 to 4325 (PPTTPLECQM…DIIATMTKNK (78 aa)) form the Carrier 4 domain. Position 4285 is an O-(pantetheine 4'-phosphoryl)serine (serine 4285). A disordered region spans residues 4326–4347 (ATGASRRLPRDDDEPIPHTKYA). The tract at residues 4353-4793 (SYAQGRLWFL…SLPLLTEDGR (441 aa)) is condensation 4. Positions 4819 to 5231 (FKEQVSRHPN…GRMDVQVKIR (413 aa)) are adenylation 5. The 77-residue stretch at 5360-5436 (KPTTDMEVAL…ALARRQEEIV (77 aa)) folds into the Carrier 5 domain. Serine 5397 carries the O-(pantetheine 4'-phosphoryl)serine modification. The segment at 5474–5828 (VEDMLPLTSM…GIKMKLHFFT (355 aa)) is condensation 5.

It belongs to the NRP synthetase family.

The protein operates within secondary metabolite biosynthesis. Its function is as follows. Nonribosomal peptide synthetase; part of the gene cluster that mediates the biosynthesis of sansalvamide, a cyclic pentadepsipeptide that shows promising results as potential anti-cancer drug. The nonribosmal peptide synthetase NRPS30 produces sansalvamide by incorporating successively one phenylalanine, one leucine, one alpha-hydroxyisocaproic acid (HICA), one valine and one leucine before sansalvamide is released from by cyclization by the terminal C domain of NRPS30. The HICA residue is probably provided by reduction of alpha-ketoisocaproate by the cluster-specific aldo-keto reductase (NECHADRAFT_45914). In Fusarium vanettenii (strain ATCC MYA-4622 / CBS 123669 / FGSC 9596 / NRRL 45880 / 77-13-4) (Fusarium solani subsp. pisi), this protein is Nonribosomal peptide synthetase 30.